The sequence spans 103 residues: Large ribosomal subunit protein bL21 (103 aa).

This sequence belongs to the bacterial ribosomal protein bL21 family. In terms of assembly, part of the 50S ribosomal subunit. Contacts protein L20.

In terms of biological role, this protein binds to 23S rRNA in the presence of protein L20. The chain is Large ribosomal subunit protein bL21 from Aromatoleum aromaticum (strain DSM 19018 / LMG 30748 / EbN1) (Azoarcus sp. (strain EbN1)).